A 267-amino-acid polypeptide reads, in one-letter code: Cell cycle checkpoint protein RAD1 homolog mrt-2 (267 aa).

It belongs to the Rad1 family. Probable component of the toroidal 9-1-1 (RAD9-RAD1-HUS1) complex, composed of hpr-9, mrt-2 and hus-1. Interacts with hus-1. Might associate with hpr-9.

It is found in the nucleus. It carries out the reaction Exonucleolytic cleavage in the 3'- to 5'-direction to yield nucleoside 5'-phosphates.. May be a component of the 9-1-1 cell-cycle checkpoint response complex that plays a major role in DNA repair. Promotes DNA double strand break-induced cell cycle arrest and apoptosis, thereby playing a role in genome stability. Also required for telomere length maintenance and germline immortality. May possess 3'-&gt;5' double stranded DNA exonuclease activity. The chain is Cell cycle checkpoint protein RAD1 homolog mrt-2 from Caenorhabditis elegans.